The following is a 469-amino-acid chain: NADH-quinone oxidoreductase subunit N (469 aa).

A run of 14 helical transmembrane segments spans residues 6–26 (IWII…LLLG), 37–57 (VGVA…PAAL), 61–81 (LGVA…LTAA), 96–116 (ISGE…AVVS), 121–141 (LLIL…LVAI), 156–176 (LLLG…LYAA), 197–217 (PIAL…ISLV), 234–254 (VVAF…LLLL), 263–283 (LHTP…LAAL), 291–311 (MLAY…LTGS), 315–335 (FAAV…AFGA), 362–382 (AGIL…AGFI), 397–419 (IPLA…RVVV), and 441–461 (IALS…SPLL).

It belongs to the complex I subunit 2 family. In terms of assembly, NDH-1 is composed of 14 different subunits. Subunits NuoA, H, J, K, L, M, N constitute the membrane sector of the complex.

It localises to the cell inner membrane. The catalysed reaction is a quinone + NADH + 5 H(+)(in) = a quinol + NAD(+) + 4 H(+)(out). In terms of biological role, NDH-1 shuttles electrons from NADH, via FMN and iron-sulfur (Fe-S) centers, to quinones in the respiratory chain. The immediate electron acceptor for the enzyme in this species is believed to be ubiquinone. Couples the redox reaction to proton translocation (for every two electrons transferred, four hydrogen ions are translocated across the cytoplasmic membrane), and thus conserves the redox energy in a proton gradient. This chain is NADH-quinone oxidoreductase subunit N, found in Geotalea uraniireducens (strain Rf4) (Geobacter uraniireducens).